The primary structure comprises 72 residues: Putative beta-neurotoxin (72 aa).

An N-terminal signal peptide occupies residues 1-7 (IDMVVEC). The region spanning 9 to 71 (KDGYLMEHDG…TWSRATNRCG (63 aa)) is the LCN-type CS-alpha/beta domain. 4 disulfide bridges follow: cysteine 19–cysteine 70, cysteine 23–cysteine 45, cysteine 31–cysteine 51, and cysteine 35–cysteine 53.

As to expression, expressed by the venom gland.

The protein resides in the secreted. Its function is as follows. Beta toxins bind voltage-independently at site-4 of sodium channels (Nav) and shift the voltage of activation toward more negative potentials thereby affecting sodium channel activation and promoting spontaneous and repetitive firing. The protein is Putative beta-neurotoxin of Tityus pachyurus (Colombian scorpion).